The sequence spans 296 residues: tRNA uridine(34) hydroxylase (296 aa).

In terms of domain architecture, Rhodanese spans 132-226; it reads AGRPVVMLDT…YFEEVGGAHY (95 aa). C186 acts as the Cysteine persulfide intermediate in catalysis.

It belongs to the TrhO family.

The catalysed reaction is uridine(34) in tRNA + AH2 + O2 = 5-hydroxyuridine(34) in tRNA + A + H2O. Functionally, catalyzes oxygen-dependent 5-hydroxyuridine (ho5U) modification at position 34 in tRNAs. This Burkholderia thailandensis (strain ATCC 700388 / DSM 13276 / CCUG 48851 / CIP 106301 / E264) protein is tRNA uridine(34) hydroxylase.